Here is a 353-residue protein sequence, read N- to C-terminus: Abasic site processing protein HMCES (353 aa).

The active-site Nucleophile is the cysteine 2. The residue at position 2 (cysteine 2) is a Thiazolidine linkage to a ring-opened DNA abasic site. Glutamate 127 is a catalytic residue. Glycyl lysine isopeptide (Lys-Gly) (interchain with G-Cter in SUMO2) cross-links involve residues lysine 148 and lysine 151. Phosphoserine is present on serine 160. Glycyl lysine isopeptide (Lys-Gly) (interchain with G-Cter in SUMO2) cross-links involve residues lysine 274 and lysine 275. The disordered stretch occupies residues 292-353 (TKSPKKEVPD…DEPMAKKPNS (62 aa)). Serine 294 carries the phosphoserine modification. Residues 295–307 (PKKEVPDSPKKDA) are compositionally biased toward basic and acidic residues. Residue lysine 305 forms a Glycyl lysine isopeptide (Lys-Gly) (interchain with G-Cter in SUMO2) linkage. A Phosphoserine modification is found at serine 321. Residues 332 to 338 (SFLDRWL) carry the PIP-box motif. The span at 336 to 353 (RWLKQEKEDEPMAKKPNS) shows a compositional bias: basic and acidic residues. Residues lysine 339 and lysine 342 each participate in a glycyl lysine isopeptide (Lys-Gly) (interchain with G-Cter in SUMO2) cross-link.

This sequence belongs to the SOS response-associated peptidase family. In terms of assembly, interacts (via PIP-box motif) with PCNA. In terms of tissue distribution, expressed in embryonic stem cells.

The protein localises to the chromosome. Its activity is regulated as follows. Formation and reversal of DNA-protein cross-link depends on DNA context. Catalyzes formation of the thiazolidine linkage in presence of abasic sites in single-stranded DNA. Mediates the reversal of the thiazolidine cross-link in presence of double stranded DNA. Its function is as follows. Sensor of abasic sites in single-stranded DNA (ssDNA) required to preserve genome integrity by promoting error-free repair of abasic sites. Acts as an enzyme that recognizes and binds abasic sites in ssDNA at replication forks and chemically modifies the lesion by forming a covalent cross-link with DNA: forms a stable thiazolidine linkage between a ring-opened abasic site and the alpha-amino and sulfhydryl substituents of its N-terminal catalytic cysteine residue. Promotes error-free repair by protecting abasic sites from translesion synthesis (TLS) polymerases and endonucleases that are error-prone and would generate mutations and double-strand breaks. The HMCES DNA-protein cross-link is then either reversed or degraded. HMCES is able to catalyze the reversal of its thiazolidine cross-link and cycle between a cross-link and a non-cross-linked state depending on DNA context: mediates self-reversal of the thiazolidine cross-link in double stranded DNA, allowing APEX1 to initiate downstream repair of abasic sites. The HMCES DNA-protein cross-link can also be degraded by the SPRTN metalloprotease following unfolding by the BRIP1/FANCJ helicase. Has preference for ssDNA, but can also accommodate double-stranded DNA with 3' or 5' overhang (dsDNA), and dsDNA-ssDNA 3' junction. Plays a protective role during somatic hypermutation of immunoglobulin genes in B-cells: acts via its ability to form covalent cross-links with abasic sites, thereby limiting the accumulation of deletions in somatic hypermutation target regions. Also involved in class switch recombination (CSR) in B-cells independently of the formation of a DNA-protein cross-link: acts by binding and protecting ssDNA overhangs to promote DNA double-strand break repair through the microhomology-mediated alternative-end-joining (Alt-EJ) pathway. Acts as a protease: mediates autocatalytic processing of its N-terminal methionine in order to expose the catalytic cysteine. In Mus musculus (Mouse), this protein is Abasic site processing protein HMCES.